Reading from the N-terminus, the 341-residue chain is MPKSNHSTAPLPFPILIGDIGGTNARFSILTDAYAEPKQFPNVRTADFATIDEAIQKGVLDKTAVQPRSAILAVAGPINDDEIPLTNCAWVVRPKTMIEGLGIEDVLVVNDFEAQALAIAALSDENRERIGSATGDMVASRVVLGPGTGLGVGGLVHAQHTWIPVPGEGGHIDLGPRSKRDYEIFPHIETIEGRVSAEQILCGRGLVNLYNAICVVDGIQPTMKDPADITSHALDGSDKVAVETVSLFATYLGRVAGDMAMVFMARGGVYLSGGISQKIIPALKKPEFRQAFEDKAPHSALLRTIPTYVVTHPLAALAGLSSYARMPANFGVSTEGRRWRR.

Residue 18 to 23 coordinates ATP; sequence GDIGGT.

This sequence belongs to the bacterial glucokinase family.

The protein localises to the cytoplasm. The catalysed reaction is D-glucose + ATP = D-glucose 6-phosphate + ADP + H(+). The chain is Glucokinase from Rhizobium etli (strain ATCC 51251 / DSM 11541 / JCM 21823 / NBRC 15573 / CFN 42).